Here is a 439-residue protein sequence, read N- to C-terminus: Trigger factor (439 aa).

One can recognise a PPIase FKBP-type domain in the interval Gly165–Pro250.

The protein belongs to the FKBP-type PPIase family. Tig subfamily.

It localises to the cytoplasm. It catalyses the reaction [protein]-peptidylproline (omega=180) = [protein]-peptidylproline (omega=0). In terms of biological role, involved in protein export. Acts as a chaperone by maintaining the newly synthesized protein in an open conformation. Functions as a peptidyl-prolyl cis-trans isomerase. The protein is Trigger factor of Campylobacter lari (strain RM2100 / D67 / ATCC BAA-1060).